We begin with the raw amino-acid sequence, 953 residues long: Translation initiation factor IF-2 (953 aa).

2 disordered regions span residues 52-247 and 279-363; these read KASK…LAEL and TKLK…TERK. 3 stretches are compositionally biased toward basic and acidic residues: residues 80 to 89, 98 to 111, and 140 to 188; these read TGSEHVEKTQ, FKAE…EQAA, and QGDK…ENHK. The span at 191-207 shows a compositional bias: polar residues; sequence RFTNQKKQGRQEPQSKS. Residues 229 to 247 show a composition bias toward basic and acidic residues; it reads RQSETRFRAQQEAKRLAEL. Positions 282 to 291 are enriched in polar residues; the sequence is KSSNISAKST. Over residues 300-317 the composition is skewed to basic and acidic residues; sequence ARPEKNRELTHHSQEGQK. The segment covering 322-338 has biased composition (low complexity); the sequence is SWNSQNQVRNQKNSNWN. Residues 339–348 are compositionally biased toward basic residues; the sequence is KNKKTKKGKN. The 170-residue stretch at 454 to 623 folds into the tr-type G domain; the sequence is ERAPVVTIMG…LLVAEVEELK (170 aa). The G1 stretch occupies residues 463–470; it reads GHVDHGKT. 463–470 lines the GTP pocket; the sequence is GHVDHGKT. The interval 488 to 492 is G2; it reads GITQH. Residues 509–512 are G3; that stretch reads DTPG. Residues 509 to 513 and 563 to 566 contribute to the GTP site; these read DTPGH and NKID. The segment at 563-566 is G4; it reads NKID. The tract at residues 599-601 is G5; that stretch reads SAK.

This sequence belongs to the TRAFAC class translation factor GTPase superfamily. Classic translation factor GTPase family. IF-2 subfamily.

The protein localises to the cytoplasm. In terms of biological role, one of the essential components for the initiation of protein synthesis. Protects formylmethionyl-tRNA from spontaneous hydrolysis and promotes its binding to the 30S ribosomal subunits. Also involved in the hydrolysis of GTP during the formation of the 70S ribosomal complex. The protein is Translation initiation factor IF-2 of Streptococcus pyogenes serotype M5 (strain Manfredo).